The sequence spans 607 residues: NADH-ubiquinone oxidoreductase chain 5 (607 aa).

Transmembrane regions (helical) follow at residues 3–23 (IFTT…LISM), 35–55 (YTTT…LMFF), 84–104 (FFSI…MQFS), 117–137 (FIKY…ANNM), 140–160 (LFIG…WWYG), 171–191 (AILY…WFSL), 210–230 (LIPL…FGLH), 241–261 (TPVS…FLLV), 272–292 (FILT…AICA), 301–320 (IIAF…LGMN), 324–344 (LAFL…MCSG), 365–385 (IMPF…GMPF), 405–427 (NAWA…MRII), 457–477 (LAFG…PTSI), 482–502 (MPWF…LIAL), and 586–606 (LYFM…SINL).

The protein belongs to the complex I subunit 5 family. Core subunit of respiratory chain NADH dehydrogenase (Complex I) which is composed of 45 different subunits.

The protein resides in the mitochondrion inner membrane. It catalyses the reaction a ubiquinone + NADH + 5 H(+)(in) = a ubiquinol + NAD(+) + 4 H(+)(out). Functionally, core subunit of the mitochondrial membrane respiratory chain NADH dehydrogenase (Complex I) which catalyzes electron transfer from NADH through the respiratory chain, using ubiquinone as an electron acceptor. Essential for the catalytic activity and assembly of complex I. The chain is NADH-ubiquinone oxidoreductase chain 5 (Mtnd5) from Mus musculus (Mouse).